Consider the following 164-residue polypeptide: Bacterial ferritin (164 aa).

A Ferritin-like diiron domain is found at 1-147; sequence MKGKKSVISR…QQLGLIARMG (147 aa). Fe cation-binding residues include glutamate 18, glutamate 51, histidine 54, glutamate 94, glutamate 129, and histidine 132.

Belongs to the bacterioferritin family. As to quaternary structure, heterooligomer of 24 subunits, arranged as 12 dimers, that are packed together to form an approximately spherical molecule with a central cavity, in which large amounts of iron can be deposited.

It catalyses the reaction 4 Fe(2+) + O2 + 4 H(+) = 4 Fe(3+) + 2 H2O. The catalysed reaction is Fe(2+)(in) = Fe(2+)(out). Functionally, iron-storage protein, whose ferroxidase center binds Fe(2+), oxidizes it using dioxygen to Fe(3+), and participates in the subsequent Fe(3+) oxide mineral core formation within the central cavity of the BFR protein shell. In Paramagnetospirillum magnetotacticum (Aquaspirillum magnetotacticum), this protein is Bacterial ferritin.